The following is a 302-amino-acid chain: Urease accessory protein UreD 1 (302 aa).

It belongs to the UreD family. As to quaternary structure, ureD, UreF and UreG form a complex that acts as a GTP-hydrolysis-dependent molecular chaperone, activating the urease apoprotein by helping to assemble the nickel containing metallocenter of UreC. The UreE protein probably delivers the nickel.

The protein localises to the cytoplasm. Functionally, required for maturation of urease via the functional incorporation of the urease nickel metallocenter. The protein is Urease accessory protein UreD 1 of Psychrobacter cryohalolentis (strain ATCC BAA-1226 / DSM 17306 / VKM B-2378 / K5).